Reading from the N-terminus, the 401-residue chain is Homoserine O-acetyltransferase (401 aa).

The region spanning 37 to 358 is the AB hydrolase-1 domain; that stretch reads NAVLVCHALT…HGHDAFLVEP (322 aa). S146 serves as the catalytic Nucleophile. R215 contacts substrate. Residues D318 and H351 contribute to the active site. Residue D352 participates in substrate binding.

The protein belongs to the AB hydrolase superfamily. MetX family. In terms of assembly, homodimer.

It localises to the cytoplasm. The enzyme catalyses L-homoserine + acetyl-CoA = O-acetyl-L-homoserine + CoA. It participates in amino-acid biosynthesis; L-methionine biosynthesis via de novo pathway; O-acetyl-L-homoserine from L-homoserine: step 1/1. In terms of biological role, transfers an acetyl group from acetyl-CoA to L-homoserine, forming acetyl-L-homoserine. In Natronomonas pharaonis (strain ATCC 35678 / DSM 2160 / CIP 103997 / JCM 8858 / NBRC 14720 / NCIMB 2260 / Gabara) (Halobacterium pharaonis), this protein is Homoserine O-acetyltransferase.